The following is a 482-amino-acid chain: Adenylosuccinate lyase (482 aa).

Residues 14 to 15 (RY), 82 to 84 (RHD), and 108 to 109 (TS) each bind substrate. Residue H156 is the Proton donor/acceptor of the active site. Residue K196 forms a Glycyl lysine isopeptide (Lys-Gly) (interchain with G-Cter in ubiquitin) linkage. Q238 serves as a coordination point for substrate. S286 acts as the Proton donor/acceptor in catalysis. 4 residues coordinate substrate: R300, R326, S331, and R335.

It belongs to the lyase 1 family. Adenylosuccinate lyase subfamily. Homotetramer. Residues from neighboring subunits contribute catalytic and substrate-binding residues to each active site.

It catalyses the reaction N(6)-(1,2-dicarboxyethyl)-AMP = fumarate + AMP. The catalysed reaction is (2S)-2-[5-amino-1-(5-phospho-beta-D-ribosyl)imidazole-4-carboxamido]succinate = 5-amino-1-(5-phospho-beta-D-ribosyl)imidazole-4-carboxamide + fumarate. Its pathway is purine metabolism; AMP biosynthesis via de novo pathway; AMP from IMP: step 2/2. It participates in purine metabolism; IMP biosynthesis via de novo pathway; 5-amino-1-(5-phospho-D-ribosyl)imidazole-4-carboxamide from 5-amino-1-(5-phospho-D-ribosyl)imidazole-4-carboxylate: step 2/2. This chain is Adenylosuccinate lyase (ADE13), found in Saccharomyces cerevisiae (strain ATCC 204508 / S288c) (Baker's yeast).